We begin with the raw amino-acid sequence, 459 residues long: uncharacterized protein (459 aa).

The tract at residues 28–47 (AHDEELTGPPQKPAYAAKPA) is disordered. The 180-residue stretch at 35–214 (GPPQKPAYAA…TEVIVKLHPR (180 aa)) folds into the FAD-binding PCMH-type domain.

Belongs to the oxygen-dependent FAD-linked oxidoreductase family. It depends on FAD as a cofactor.

This is an uncharacterized protein from Mycobacterium tuberculosis (strain CDC 1551 / Oshkosh).